Reading from the N-terminus, the 341-residue chain is Cyclic GMP-AMP synthase-like receptor (341 aa).

Residues Ser64 and 77-79 (EFD) each bind ATP. Mg(2+) contacts are provided by Glu77, Asp79, and Asp172. Asp172 lines the GTP pocket. ATP is bound by residues Lys230 and 246–250 (SYHIK). Mn(2+) is bound at residue Glu258.

This sequence belongs to the mab-21 family. Requires Mg(2+) as cofactor. The cofactor is Mn(2+).

It catalyses the reaction GTP + ATP = 2',3'-cGAMP + 2 diphosphate. It carries out the reaction GTP + ATP = pppGp(2'-5')A + diphosphate. The catalysed reaction is pppGp(2'-5')A = 2',3'-cGAMP + diphosphate. In terms of biological role, nucleotidyltransferase that catalyzes the formation of cyclic GMP-AMP (2',3'-cGAMP) from ATP and GTP and plays a key role in innate immunity. Acts as a key sensor of double-stranded RNA (dsRNA), the presence of dsRNA in the cytoplasm being a danger signal that triggers the immune responses. Directly binds dsRNA, activating the nucleotidyltransferase activity, leading to synthesis of 2',3'-cGAMP, a second messenger that binds to and activates Sting, thereby triggering the immune response via activation of the NF-kappa-B transcription factor. This is Cyclic GMP-AMP synthase-like receptor from Hydra vulgaris (Hydra).